A 302-amino-acid chain; its full sequence is Coiled-coil domain-containing protein 2 (302 aa).

A signal peptide spans 1–22 (MKNFGLLVVCLSLATLVIPSDG). Positions 198–234 (FADAMEKKAEALENAAEAAAEYISDQSEEVDDLSEEV) form a coiled coil. The disordered stretch occupies residues 221–257 (SDQSEEVDDLSEEVLDDDSDENDSTSSESEVEDSDVD). Residues 223 to 257 (QSEEVDDLSEEVLDDDSDENDSTSSESEVEDSDVD) show a composition bias toward acidic residues. A glycan (N-linked (GlcNAc...) asparagine) is linked at N242.

As to expression, component of the acid-insoluble organic matrix of calcified layers of the shell (at protein level).

It localises to the secreted. The sequence is that of Coiled-coil domain-containing protein 2 from Lottia gigantea (Giant owl limpet).